The primary structure comprises 532 residues: Flavin-containing monooxygenase 1 (532 aa).

The residue at position 2 (Ala2) is an N-acetylalanine. The Lumenal segment spans residues 2–510; it reads AKRVAIVGAG…TRIVQESPTP (509 aa). Residues 9 to 13, Glu32, 40 to 41, and 61 to 62 each bind FAD; these read GAGVS, LW, and NS. NADP(+) contacts are provided by residues 60 to 61 and 195 to 198; these read SN and SGTD. The chain crosses the membrane as a helical span at residues 511-531; the sequence is FASLLKLLSLLALLMAIFLIF. Residue Leu532 is a topological domain, cytoplasmic.

This sequence belongs to the FMO family. Requires FAD as cofactor. Liver.

The protein localises to the endoplasmic reticulum membrane. It catalyses the reaction hypotaurine + NADPH + O2 + H(+) = taurine + NADP(+) + H2O. The catalysed reaction is hypotaurine + NADH + O2 + H(+) = taurine + NAD(+) + H2O. The enzyme catalyses trimethylamine + NADPH + O2 = trimethylamine N-oxide + NADP(+) + H2O. It carries out the reaction N,N-dimethylaniline + NADPH + O2 + H(+) = N,N-dimethylaniline N-oxide + NADP(+) + H2O. Functionally, broad spectrum monooxygenase that catalyzes the oxygenation of a wide variety of nitrogen- and sulfur-containing compounds including xenobiotics. Catalyzes the S-oxygenation of hypotaurine to produce taurine, an organic osmolyte involved in cell volume regulation as well as a variety of cytoprotective and developmental processes. In vitro, catalyzes the N-oxygenation of trimethylamine (TMA) to produce trimethylamine N-oxide (TMAO) and could therefore participate to the detoxification of this compound that is generated by the action of gut microbiota from dietary precursors such as choline, choline containing compounds, betaine or L-carnitine. This is Flavin-containing monooxygenase 1 (FMO1) from Canis lupus familiaris (Dog).